We begin with the raw amino-acid sequence, 57 residues long: Large ribosomal subunit protein bL32 (57 aa).

Positions 1–19 (MATPKRRMSRANTRSRRSQ) are enriched in basic residues. The segment at 1 to 21 (MATPKRRMSRANTRSRRSQWK) is disordered.

The protein belongs to the bacterial ribosomal protein bL32 family.

The sequence is that of Large ribosomal subunit protein bL32 from Mycobacterium ulcerans (strain Agy99).